Consider the following 445-residue polypeptide: Phosphoglucosamine mutase (445 aa).

Ser-99 (phosphoserine intermediate) is an active-site residue. Positions 99, 242, 244, and 246 each coordinate Mg(2+). Phosphoserine is present on Ser-99.

It belongs to the phosphohexose mutase family. Mg(2+) is required as a cofactor. Activated by phosphorylation.

It carries out the reaction alpha-D-glucosamine 1-phosphate = D-glucosamine 6-phosphate. Its function is as follows. Catalyzes the conversion of glucosamine-6-phosphate to glucosamine-1-phosphate. The chain is Phosphoglucosamine mutase from Helicobacter pylori (strain HPAG1).